A 211-amino-acid polypeptide reads, in one-letter code: Uracil phosphoribosyltransferase (211 aa).

Residues arginine 79, arginine 104, and 131 to 139 (DPMLATGGS) each bind 5-phospho-alpha-D-ribose 1-diphosphate. Uracil is bound by residues isoleucine 196 and 201 to 203 (GDA). Residue aspartate 202 participates in 5-phospho-alpha-D-ribose 1-diphosphate binding.

The protein belongs to the UPRTase family. Mg(2+) is required as a cofactor.

It carries out the reaction UMP + diphosphate = 5-phospho-alpha-D-ribose 1-diphosphate + uracil. Its pathway is pyrimidine metabolism; UMP biosynthesis via salvage pathway; UMP from uracil: step 1/1. Allosterically activated by GTP. Functionally, catalyzes the conversion of uracil and 5-phospho-alpha-D-ribose 1-diphosphate (PRPP) to UMP and diphosphate. The chain is Uracil phosphoribosyltransferase from Limosilactobacillus reuteri (strain DSM 20016) (Lactobacillus reuteri).